Here is a 408-residue protein sequence, read N- to C-terminus: Acetate kinase (408 aa).

Asparagine 7 serves as a coordination point for Mg(2+). Lysine 14 serves as a coordination point for ATP. Arginine 91 is a binding site for substrate. Aspartate 148 acts as the Proton donor/acceptor in catalysis. Residues 208 to 212 (HLGNG), 283 to 285 (DFR), and 331 to 335 (GIGEN) each bind ATP. Position 384 (glutamate 384) interacts with Mg(2+).

This sequence belongs to the acetokinase family. As to quaternary structure, homodimer. Requires Mg(2+) as cofactor. It depends on Mn(2+) as a cofactor.

Its subcellular location is the cytoplasm. The enzyme catalyses acetate + ATP = acetyl phosphate + ADP. It functions in the pathway metabolic intermediate biosynthesis; acetyl-CoA biosynthesis; acetyl-CoA from acetate: step 1/2. Functionally, catalyzes the formation of acetyl phosphate from acetate and ATP. Can also catalyze the reverse reaction. This Methanosarcina acetivorans (strain ATCC 35395 / DSM 2834 / JCM 12185 / C2A) protein is Acetate kinase.